Consider the following 322-residue polypeptide: Phosphatidylserine decarboxylase proenzyme (322 aa).

Catalysis depends on charge relay system; for autoendoproteolytic cleavage activity residues Asp-90, His-147, and Ser-254. The active-site Schiff-base intermediate with substrate; via pyruvic acid; for decarboxylase activity is the Ser-254. The residue at position 254 (Ser-254) is a Pyruvic acid (Ser); by autocatalysis. The tract at residues Glu-294–Thr-322 is disordered. Residues Asp-303–Thr-322 show a composition bias toward basic and acidic residues.

It belongs to the phosphatidylserine decarboxylase family. PSD-B subfamily. Prokaryotic type I sub-subfamily. As to quaternary structure, heterodimer of a large membrane-associated beta subunit and a small pyruvoyl-containing alpha subunit. Pyruvate serves as cofactor. Post-translationally, is synthesized initially as an inactive proenzyme. Formation of the active enzyme involves a self-maturation process in which the active site pyruvoyl group is generated from an internal serine residue via an autocatalytic post-translational modification. Two non-identical subunits are generated from the proenzyme in this reaction, and the pyruvate is formed at the N-terminus of the alpha chain, which is derived from the carboxyl end of the proenzyme. The autoendoproteolytic cleavage occurs by a canonical serine protease mechanism, in which the side chain hydroxyl group of the serine supplies its oxygen atom to form the C-terminus of the beta chain, while the remainder of the serine residue undergoes an oxidative deamination to produce ammonia and the pyruvoyl prosthetic group on the alpha chain. During this reaction, the Ser that is part of the protease active site of the proenzyme becomes the pyruvoyl prosthetic group, which constitutes an essential element of the active site of the mature decarboxylase.

Its subcellular location is the cell membrane. The enzyme catalyses a 1,2-diacyl-sn-glycero-3-phospho-L-serine + H(+) = a 1,2-diacyl-sn-glycero-3-phosphoethanolamine + CO2. It participates in phospholipid metabolism; phosphatidylethanolamine biosynthesis; phosphatidylethanolamine from CDP-diacylglycerol: step 2/2. Catalyzes the formation of phosphatidylethanolamine (PtdEtn) from phosphatidylserine (PtdSer). In Salmonella paratyphi C (strain RKS4594), this protein is Phosphatidylserine decarboxylase proenzyme.